The chain runs to 201 residues: Large ribosomal subunit protein uL4 (201 aa).

The segment at 45-71 (AQKTRAEVTGSGKKPWRQKGTGRARAG) is disordered.

The protein belongs to the universal ribosomal protein uL4 family. As to quaternary structure, part of the 50S ribosomal subunit.

In terms of biological role, one of the primary rRNA binding proteins, this protein initially binds near the 5'-end of the 23S rRNA. It is important during the early stages of 50S assembly. It makes multiple contacts with different domains of the 23S rRNA in the assembled 50S subunit and ribosome. Forms part of the polypeptide exit tunnel. The protein is Large ribosomal subunit protein uL4 of Shewanella loihica (strain ATCC BAA-1088 / PV-4).